Consider the following 448-residue polypeptide: Probable glycine dehydrogenase (decarboxylating) subunit 1 (448 aa).

Belongs to the GcvP family. N-terminal subunit subfamily. The glycine cleavage system is composed of four proteins: P, T, L and H. In this organism, the P 'protein' is a heterodimer of two subunits.

The enzyme catalyses N(6)-[(R)-lipoyl]-L-lysyl-[glycine-cleavage complex H protein] + glycine + H(+) = N(6)-[(R)-S(8)-aminomethyldihydrolipoyl]-L-lysyl-[glycine-cleavage complex H protein] + CO2. Its function is as follows. The glycine cleavage system catalyzes the degradation of glycine. The P protein binds the alpha-amino group of glycine through its pyridoxal phosphate cofactor; CO(2) is released and the remaining methylamine moiety is then transferred to the lipoamide cofactor of the H protein. The polypeptide is Probable glycine dehydrogenase (decarboxylating) subunit 1 (Listeria monocytogenes serovar 1/2a (strain ATCC BAA-679 / EGD-e)).